The primary structure comprises 538 residues: Phospho-2-dehydro-3-deoxyheptonate aldolase 1, chloroplastic (538 aa).

The N-terminal 74 residues, 1-74 (MALSSTSTTN…KPSKSSPPAA (74 aa)), are a transit peptide targeting the chloroplast. Residues 55-82 (DSNKIPIVSDKPSKSSPPAATATTAPAP) form a disordered region. Low complexity predominate over residues 68-82 (KSSPPAATATTAPAP). Residue threonine 75 is modified to Blocked amino end (Thr).

It belongs to the class-II DAHP synthase family.

The protein localises to the plastid. The protein resides in the chloroplast. It carries out the reaction D-erythrose 4-phosphate + phosphoenolpyruvate + H2O = 7-phospho-2-dehydro-3-deoxy-D-arabino-heptonate + phosphate. It participates in metabolic intermediate biosynthesis; chorismate biosynthesis; chorismate from D-erythrose 4-phosphate and phosphoenolpyruvate: step 1/7. Activation by tryptophan (a hysteretic factor). The sequence is that of Phospho-2-dehydro-3-deoxyheptonate aldolase 1, chloroplastic (SHKA) from Solanum tuberosum (Potato).